We begin with the raw amino-acid sequence, 862 residues long: DNA gyrase subunit A (862 aa).

Positions 38 to 501 (LPDARDGLKP…DYDDIDVEDL (464 aa)) constitute a Topo IIA-type catalytic domain. Y126 (O-(5'-phospho-DNA)-tyrosine intermediate) is an active-site residue. The GyrA-box signature appears at 528 to 534 (QKRGGKG). The interval 843-862 (KEESDDDDIVADDTQEQDME) is disordered. Residues 845–862 (ESDDDDIVADDTQEQDME) show a composition bias toward acidic residues.

The protein belongs to the type II topoisomerase GyrA/ParC subunit family. Heterotetramer, composed of two GyrA and two GyrB chains. In the heterotetramer, GyrA contains the active site tyrosine that forms a transient covalent intermediate with DNA, while GyrB binds cofactors and catalyzes ATP hydrolysis.

The protein resides in the cytoplasm. It carries out the reaction ATP-dependent breakage, passage and rejoining of double-stranded DNA.. Its function is as follows. A type II topoisomerase that negatively supercoils closed circular double-stranded (ds) DNA in an ATP-dependent manner to modulate DNA topology and maintain chromosomes in an underwound state. Negative supercoiling favors strand separation, and DNA replication, transcription, recombination and repair, all of which involve strand separation. Also able to catalyze the interconversion of other topological isomers of dsDNA rings, including catenanes and knotted rings. Type II topoisomerases break and join 2 DNA strands simultaneously in an ATP-dependent manner. This Campylobacter fetus protein is DNA gyrase subunit A.